The sequence spans 206 residues: Large ribosomal subunit protein uL4 (206 aa).

Positions 63–94 (MYKQKGTGRARHHSARAPQFRGGGKAHGPVVR) are disordered. The segment covering 64–77 (YKQKGTGRARHHSA) has biased composition (basic residues).

This sequence belongs to the universal ribosomal protein uL4 family. Part of the 50S ribosomal subunit.

In terms of biological role, one of the primary rRNA binding proteins, this protein initially binds near the 5'-end of the 23S rRNA. It is important during the early stages of 50S assembly. It makes multiple contacts with different domains of the 23S rRNA in the assembled 50S subunit and ribosome. Functionally, forms part of the polypeptide exit tunnel. This chain is Large ribosomal subunit protein uL4, found in Mesorhizobium japonicum (strain LMG 29417 / CECT 9101 / MAFF 303099) (Mesorhizobium loti (strain MAFF 303099)).